An 85-amino-acid polypeptide reads, in one-letter code: U4-theraphotoxin-Hhn1a (85 aa).

A signal peptide spans 1–22; sequence MKVTLIAILTCAAVLVLHTTAA. Positions 23-48 are excised as a propeptide; the sequence is EEFEAESQLMEVGMPDTELAAVDEER. 3 disulfides stabilise this stretch: C52–C66, C56–C77, and C71–C82.

The protein belongs to the neurotoxin 12 (Hwtx-2) family. 02 (Hwtx-2) subfamily. As to quaternary structure, monomer. Expressed by the venom gland.

It localises to the secreted. Its function is as follows. Neurotoxin active on both insects and mammals. The protein is U4-theraphotoxin-Hhn1a of Cyriopagopus hainanus (Chinese bird spider).